The following is a 181-amino-acid chain: ATP-dependent protease subunit HslV (181 aa).

Thr9 is an active-site residue. Residues Ala166, Cys169, and Thr172 each coordinate Na(+).

This sequence belongs to the peptidase T1B family. HslV subfamily. As to quaternary structure, a double ring-shaped homohexamer of HslV is capped on each side by a ring-shaped HslU homohexamer. The assembly of the HslU/HslV complex is dependent on binding of ATP.

It is found in the cytoplasm. The enzyme catalyses ATP-dependent cleavage of peptide bonds with broad specificity.. With respect to regulation, allosterically activated by HslU binding. Functionally, protease subunit of a proteasome-like degradation complex believed to be a general protein degrading machinery. The protein is ATP-dependent protease subunit HslV of Staphylococcus aureus (strain JH1).